The following is a 291-amino-acid chain: Protein US2 (291 aa).

G2 carries the post-translational modification N-acetylglycine; by host; partial. The interval P251 to P270 is disordered.

It belongs to the herpesviridae HHV-1 US2 protein family. In terms of assembly, interacts with host KRT18.

It is found in the host cytoplasm. The protein resides in the host nucleus. This is Protein US2 from Homo sapiens (Human).